Reading from the N-terminus, the 234-residue chain is Covalently-linked cell wall protein 14 (234 aa).

Positions Met-1 to Ala-22 are cleaved as a signal peptide. The 87-residue stretch at Ala-23 to Ser-109 folds into the CFEM domain. 4 cysteine pairs are disulfide-bonded: Cys-27–Cys-66, Cys-31–Cys-61, Cys-41–Cys-49, and Cys-51–Cys-82. Asp-46 provides a ligand contact to heme. A compositionally biased stretch (low complexity) spans Ser-86–Thr-207. The disordered stretch occupies residues Ser-86–Gly-208. A lipid anchor (GPI-anchor amidated glycine) is attached at Gly-215. Positions Ser-216–Leu-234 are cleaved as a propeptide — removed in mature form.

Belongs to the CCW14 family. The GPI-anchor is attached to the protein in the endoplasmic reticulum and serves to target the protein to the cell surface. There, the glucosamine-inositol phospholipid moiety is cleaved off and the GPI-modified mannoprotein is covalently attached via its lipidless GPI glycan remnant to the 1,6-beta-glucan of the outer cell wall layer.

The protein resides in the secreted. It localises to the cell wall. It is found in the membrane. Functionally, beta-glucan associated cell wall protein involved in cell wall structure. May serve as cross-linking or coat-forming wall protein. The polypeptide is Covalently-linked cell wall protein 14 (SSR1) (Candida albicans (strain SC5314 / ATCC MYA-2876) (Yeast)).